A 145-amino-acid chain; its full sequence is D-aminoacyl-tRNA deacylase (145 aa).

Residues 137 to 138 carry the Gly-cisPro motif, important for rejection of L-amino acids motif; sequence GP.

The protein belongs to the DTD family. In terms of assembly, homodimer.

The protein localises to the cytoplasm. The enzyme catalyses glycyl-tRNA(Ala) + H2O = tRNA(Ala) + glycine + H(+). It carries out the reaction a D-aminoacyl-tRNA + H2O = a tRNA + a D-alpha-amino acid + H(+). In terms of biological role, an aminoacyl-tRNA editing enzyme that deacylates mischarged D-aminoacyl-tRNAs. Also deacylates mischarged glycyl-tRNA(Ala), protecting cells against glycine mischarging by AlaRS. Acts via tRNA-based rather than protein-based catalysis; rejects L-amino acids rather than detecting D-amino acids in the active site. By recycling D-aminoacyl-tRNA to D-amino acids and free tRNA molecules, this enzyme counteracts the toxicity associated with the formation of D-aminoacyl-tRNA entities in vivo and helps enforce protein L-homochirality. The sequence is that of D-aminoacyl-tRNA deacylase from Escherichia coli O81 (strain ED1a).